The sequence spans 91 residues: Defensin-like protein 95 (91 aa).

An N-terminal signal peptide occupies residues methionine 1–glycine 27. 4 disulfide bridges follow: cysteine 31/cysteine 76, cysteine 38/cysteine 63, cysteine 47/cysteine 73, and cysteine 51/cysteine 75.

Belongs to the DEFL family.

It is found in the secreted. In Arabidopsis thaliana (Mouse-ear cress), this protein is Defensin-like protein 95.